Here is a 216-residue protein sequence, read N- to C-terminus: Ras-related protein Rab-5C (216 aa).

GTP-binding residues include serine 30, alanine 31, glycine 33, lysine 34, serine 35, serine 36, histidine 47, glutamate 48, threonine 53, and glycine 79. Serine 35 contributes to the Mg(2+) binding site. Short sequence motifs (switch) lie at residues 45 to 57 (QFHE…IGAA) and 78 to 94 (AGQE…YRGA). Threonine 53 contacts Mg(2+). The residue at position 85 (serine 85) is a Phosphoserine; by LRRK2. GTP contacts are provided by asparagine 134, lysine 135, aspartate 137, alanine 165, and lysine 166. The interval 185–216 (NEPQNATGAPGRNRGVDLQENNPASRSQCCSN) is disordered. The span at 203–216 (QENNPASRSQCCSN) shows a compositional bias: polar residues. 2 S-geranylgeranyl cysteine lipidation sites follow: cysteine 213 and cysteine 214.

Belongs to the small GTPase superfamily. Rab family. In terms of assembly, interacts with EEA1. Interacts with INCA1. Interacts with GDI1, GDI2, CHML and CHM; phosphorylation at Ser-85 disrupts this interaction. Mg(2+) is required as a cofactor. In terms of processing, phosphorylation of Ser-85 in the switch II region by LRRK2 prevents the association of RAB regulatory proteins, including CHM, CHML and RAB GDP dissociation inhibitors GDI1 and GDI2. (Microbial infection) Glycosylated on arginine residues by S.typhimurium protein Ssek3.

It is found in the cell membrane. It localises to the early endosome membrane. The protein localises to the melanosome. It carries out the reaction GTP + H2O = GDP + phosphate + H(+). Its activity is regulated as follows. Regulated by guanine nucleotide exchange factors (GEFs) which promote the exchange of bound GDP for free GTP. Regulated by GTPase activating proteins (GAPs) which increase the GTP hydrolysis activity. Inhibited by GDP dissociation inhibitors (GDIs). Functionally, the small GTPases Rab are key regulators of intracellular membrane trafficking, from the formation of transport vesicles to their fusion with membranes. Rabs cycle between an inactive GDP-bound form and an active GTP-bound form that is able to recruit to membranes different sets of downstream effectors directly responsible for vesicle formation, movement, tethering and fusion. This chain is Ras-related protein Rab-5C, found in Homo sapiens (Human).